Consider the following 159-residue polypeptide: Cyclic pyranopterin monophosphate synthase (159 aa).

Residues 75–77 and 113–114 each bind substrate; these read LCH and ME. Aspartate 128 is an active-site residue.

Belongs to the MoaC family. Homohexamer; trimer of dimers.

It catalyses the reaction (8S)-3',8-cyclo-7,8-dihydroguanosine 5'-triphosphate = cyclic pyranopterin phosphate + diphosphate. It functions in the pathway cofactor biosynthesis; molybdopterin biosynthesis. Functionally, catalyzes the conversion of (8S)-3',8-cyclo-7,8-dihydroguanosine 5'-triphosphate to cyclic pyranopterin monophosphate (cPMP). The chain is Cyclic pyranopterin monophosphate synthase from Heliobacterium modesticaldum (strain ATCC 51547 / Ice1).